The sequence spans 200 residues: Small ribosomal subunit protein uS4c (200 aa).

One can recognise an S4 RNA-binding domain in the interval 88–148 (IRLDNTIFNL…PKSYYIFKLC (61 aa)).

This sequence belongs to the universal ribosomal protein uS4 family. Part of the 30S ribosomal subunit.

The protein localises to the plastid. The protein resides in the apicoplast. One of the primary rRNA binding proteins, it binds directly to 16S rRNA where it nucleates assembly of the body of the 30S subunit. The protein is Small ribosomal subunit protein uS4c (rps4) of Eimeria tenella (Coccidian parasite).